The primary structure comprises 400 residues: Integumentary mucin A.1 (400 aa).

Residues 1 to 20 (MKHIILCIHFLLMVVGLGQA) form the signal peptide. 2 consecutive P-type domains span residues 21–64 (QDCS…FYNA) and 72–115 (LECS…YART). 3 cysteine pairs are disulfide-bonded: cysteine 23–cysteine 49, cysteine 33–cysteine 48, and cysteine 43–cysteine 60. Asparagine 63 carries an N-linked (GlcNAc...) asparagine glycan. Disulfide bonds link cysteine 74–cysteine 100, cysteine 84–cysteine 99, and cysteine 94–cysteine 111. Composition is skewed to low complexity over residues 122 to 264 (PDTT…DTTP) and 272 to 299 (ETTT…ETTT). The tract at residues 122 to 302 (PDTTTASTTA…TTTETTTAPP (181 aa)) is disordered. 14 consecutive repeat copies span residues 127–135 (ASTTAETTT), 136–144 (VPTTPETTT), 145–153 (VPTTPETTT), 154–162 (VPTTPETTT), 163–171 (VPTTPETTT), 172–180 (VPTTPETTT), 181–189 (VPTTPETTT), 190–198 (VPTTPETTT), 199–207 (VPTTPETTT), 208–216 (VPTTPETTT), 217–225 (VPTTPETTT), 226–234 (VPTTPETTT), 235–243 (ASTTAETTT), and 244–252 (VPTTPETTT). The interval 127–261 (ASTTAETTTV…TEPTTTPTTD (135 aa)) is 15 X 9 AA approximate tandem repeats of [AV]-[SP]-T-T-[AP]-E-T-T-T. One copy of the 1-15; approximate repeat lies at 253 to 261 (EPTTTPTTD). 7 repeat units span residues 272 to 275 (ETTT), 276 to 279 (ETTT), 280 to 283 (ETTT), 284 to 287 (ETTT), 288 to 291 (ETTT), 292 to 295 (ETTT), and 296 to 299 (ETTT). A 7 X 4 AA repeats of E-T-T-T region spans residues 272-299 (ETTTETTTETTTETTTETTTETTTETTT). P-type domains follow at residues 298-343 (TTAP…FYTE) and 351-394 (AECT…FEKA). Intrachain disulfides connect cysteine 312/cysteine 327, cysteine 322/cysteine 339, cysteine 353/cysteine 379, cysteine 363/cysteine 378, and cysteine 373/cysteine 390.

Post-translationally, extensively O-glycosylated. Consist of about 70% carbohydrate and 30% protein. Expressed and stored exclusively in mature mucous glands of the skin.

The protein localises to the secreted. In terms of biological role, could be involved in defense against microbial infections. Protects the epithelia from external environment. The protein is Integumentary mucin A.1 of Xenopus laevis (African clawed frog).